Consider the following 92-residue polypeptide: uncharacterized protein (92 aa).

An HTH cro/C1-type domain is found at Leu-25–Val-83. Residues Arg-36–Arg-55 constitute a DNA-binding region (H-T-H motif).

This is an uncharacterized protein from Rickettsia prowazekii (strain Madrid E).